The following is a 313-amino-acid chain: Lactamase-like protein ptaB (313 aa).

Positions 104, 106, 108, and 109 each coordinate Zn(2+). The active-site Proton donor/acceptor is the Asp-108.

Belongs to the metallo-beta-lactamase superfamily. Zn(2+) serves as cofactor.

It carries out the reaction atrochrysone carboxyl-[ACP] + H2O = atrochrysone carboxylate + holo-[ACP] + H(+). It participates in secondary metabolite biosynthesis. Functionally, lactamase-like protein; part of the gene cluster that mediates the biosynthesis of pestheic acid, a diphenyl ether which is a biosynthetic precursor of the unique chloropupukeananes. The biosynthesis initiates from condensation of acetate and malonate units catalyzed by the non-reducing PKS ptaA. As the ptaA protein is TE/CLC domain-deficient, hydrolysis and Claisen cyclization of the polyketide could be catalyzed by ptaB containing a beta-lactamase domain. The ptaB protein might hydrolyze the thioester bond between the ACP of ptaA and the intermediate to release atrochrysone carboxylic acid, which is spontaneously dehydrated to form endocrocin anthrone. Endocrocin anthrone is then converted to endocrocin, catalyzed by the anthrone oxygenase ptaC. Spontaneous decarboxylation of endocrocin occurs to generate emodin. An O-methyltransferase (ptaH or ptaI) could methylate emodin to form physcion. PtaJ could then catalyze the oxidative cleavage of physcion, and rotation of the intermediate could then afford desmethylisosulochrin. PtaF, a putative NADH-dependent oxidoreductase, might also participate in the oxidative cleavage step. Desmethylisosulochrin is then transformed by another O-methyltransferase (ptaH or ptaI) to form isosulochrin. Chlorination of isosulochrin by ptaM in the cyclohexadienone B ring then produces chloroisosulochrin. PtaE is responsible for the oxidative coupling reactions of both benzophenones isosulochrin and chloroisosulochrin to RES-1214-1 and pestheic acid respectively, regardless of chlorination. This is Lactamase-like protein ptaB from Pestalotiopsis fici (strain W106-1 / CGMCC3.15140).